The following is a 693-amino-acid chain: Elongation factor G 1 (693 aa).

Residues 4–281 (NKLRNIGISA…AVTRFLPSPH (278 aa)) enclose the tr-type G domain. GTP is bound by residues 13 to 20 (AHIDSGKT), 80 to 84 (DTPGH), and 134 to 137 (NKCD).

It belongs to the TRAFAC class translation factor GTPase superfamily. Classic translation factor GTPase family. EF-G/EF-2 subfamily.

It is found in the cytoplasm. Its function is as follows. Catalyzes the GTP-dependent ribosomal translocation step during translation elongation. During this step, the ribosome changes from the pre-translocational (PRE) to the post-translocational (POST) state as the newly formed A-site-bound peptidyl-tRNA and P-site-bound deacylated tRNA move to the P and E sites, respectively. Catalyzes the coordinated movement of the two tRNA molecules, the mRNA and conformational changes in the ribosome. The sequence is that of Elongation factor G 1 (fusA) from Borreliella burgdorferi (strain ATCC 35210 / DSM 4680 / CIP 102532 / B31) (Borrelia burgdorferi).